The primary structure comprises 720 residues: Fatty acid CoA ligase Acsl3 (720 aa).

The chain crosses the membrane as a helical; Signal-anchor for type III membrane protein span at residues 21–41; sequence ILLYFIHFIISLYTILTYIPF. At 42-720 the chain is on the cytoplasmic side; that stretch reads YFLCESKQEK…ADIERMYGRK (679 aa). S683 carries the phosphoserine modification.

Belongs to the ATP-dependent AMP-binding enzyme family. It depends on Mg(2+) as a cofactor. As to expression, predominantly expressed in the brain, and to a much lesser extent, in lung, adrenal gland, kidney, small intestine, and adipose tissue but not detected in heart or liver.

It is found in the mitochondrion outer membrane. The protein resides in the peroxisome membrane. It localises to the microsome membrane. The protein localises to the endoplasmic reticulum membrane. The catalysed reaction is a long-chain fatty acid + ATP + CoA = a long-chain fatty acyl-CoA + AMP + diphosphate. It carries out the reaction (5Z,8Z,11Z,14Z)-eicosatetraenoate + ATP + CoA = (5Z,8Z,11Z,14Z)-eicosatetraenoyl-CoA + AMP + diphosphate. It catalyses the reaction a medium-chain fatty acid + ATP + CoA = a medium-chain fatty acyl-CoA + AMP + diphosphate. The enzyme catalyses 15-hydroxy-(5Z,8Z,11Z,13E)-eicosatetraenoate + ATP + CoA = 15-hydroxy-(5Z,8Z,11Z,13E)-eicosatetraenoyl-CoA + AMP + diphosphate. The catalysed reaction is 12-hydroxy-(5Z,8Z,10E,14Z)-eicosatetraenoate + ATP + CoA = 12-hydroxy-(5Z,8Z,10E,14Z)-eicosatetraenoyl-CoA + AMP + diphosphate. It carries out the reaction 5-hydroxy-(6E,8Z,11Z,14Z)-eicosatetraenoate + ATP + CoA = 5-hydroxy-(6E,8Z,11Z,14Z)-eicosatetraenoyl-CoA + AMP + diphosphate. It catalyses the reaction 14,15-epoxy-(5Z,8Z,11Z)-eicosatrienoate + ATP + CoA = 14,15-epoxy-(5Z,8Z,11Z)-eicosatrienoyl-CoA + AMP + diphosphate. The enzyme catalyses 11,12-epoxy-(5Z,8Z,14Z)-eicosatrienoate + ATP + CoA = 11,12-epoxy-(5Z,8Z,14Z)-eicosatrienoyl-CoA + AMP + diphosphate. The catalysed reaction is (E)-hexadec-2-enoate + ATP + CoA = (2E)-hexadecenoyl-CoA + AMP + diphosphate. It carries out the reaction hexadecanoate + ATP + CoA = hexadecanoyl-CoA + AMP + diphosphate. It catalyses the reaction tetradecanoate + ATP + CoA = tetradecanoyl-CoA + AMP + diphosphate. The enzyme catalyses dodecanoate + ATP + CoA = dodecanoyl-CoA + AMP + diphosphate. The catalysed reaction is octadecanoate + ATP + CoA = octadecanoyl-CoA + AMP + diphosphate. It carries out the reaction eicosanoate + ATP + CoA = eicosanoyl-CoA + AMP + diphosphate. It catalyses the reaction (9Z)-octadecenoate + ATP + CoA = (9Z)-octadecenoyl-CoA + AMP + diphosphate. The enzyme catalyses (9Z)-hexadecenoate + ATP + CoA = (9Z)-hexadecenoyl-CoA + AMP + diphosphate. The catalysed reaction is (9Z,12Z)-octadecadienoate + ATP + CoA = (9Z,12Z)-octadecadienoyl-CoA + AMP + diphosphate. It carries out the reaction (9Z,12Z,15Z)-octadecatrienoate + ATP + CoA = (9Z,12Z,15Z)-octadecatrienoyl-CoA + AMP + diphosphate. It catalyses the reaction (4Z,7Z,10Z,13Z,16Z,19Z)-docosahexaenoate + ATP + CoA = (4Z,7Z,10Z,13Z,16Z,19Z)-docosahexaenoyl-CoA + AMP + diphosphate. The enzyme catalyses (5Z,8Z,11Z,14Z,17Z)-eicosapentaenoate + ATP + CoA = (5Z,8Z,11Z,14Z,17Z)-eicosapentaenoyl-CoA + AMP + diphosphate. The catalysed reaction is a fatty acid + ATP + CoA = a fatty acyl-CoA + AMP + diphosphate. Catalyzes the conversion of long-chain fatty acids to their active form acyl-CoA for both synthesis of cellular lipids, and degradation via beta-oxidation. ACSL3 is required for the incorporation of fatty acids into phosphatidylcholine, the major phospholipid located on the surface of VLDL (very low density lipoproteins). Has mainly an anabolic role in energy metabolism. Mediates hepatic lipogenesis. Preferentially uses myristate, laurate, arachidonate and eicosapentaenoate as substrates. Both isoforms exhibit the same level of activity. The chain is Fatty acid CoA ligase Acsl3 from Rattus norvegicus (Rat).